Here is a 243-residue protein sequence, read N- to C-terminus: Pyridoxine 5'-phosphate synthase (243 aa).

Residue Asn-9 participates in 3-amino-2-oxopropyl phosphate binding. 11-12 (DH) is a binding site for 1-deoxy-D-xylulose 5-phosphate. Arg-20 is a binding site for 3-amino-2-oxopropyl phosphate. His-45 serves as the catalytic Proton acceptor. 1-deoxy-D-xylulose 5-phosphate-binding residues include Arg-47 and His-52. Glu-72 serves as the catalytic Proton acceptor. Thr-102 lines the 1-deoxy-D-xylulose 5-phosphate pocket. Catalysis depends on His-193, which acts as the Proton donor. 3-amino-2-oxopropyl phosphate-binding positions include Gly-194 and 215 to 216 (GH).

This sequence belongs to the PNP synthase family. In terms of assembly, homooctamer; tetramer of dimers.

It localises to the cytoplasm. The catalysed reaction is 3-amino-2-oxopropyl phosphate + 1-deoxy-D-xylulose 5-phosphate = pyridoxine 5'-phosphate + phosphate + 2 H2O + H(+). Its pathway is cofactor biosynthesis; pyridoxine 5'-phosphate biosynthesis; pyridoxine 5'-phosphate from D-erythrose 4-phosphate: step 5/5. Functionally, catalyzes the complicated ring closure reaction between the two acyclic compounds 1-deoxy-D-xylulose-5-phosphate (DXP) and 3-amino-2-oxopropyl phosphate (1-amino-acetone-3-phosphate or AAP) to form pyridoxine 5'-phosphate (PNP) and inorganic phosphate. In Yersinia pseudotuberculosis serotype I (strain IP32953), this protein is Pyridoxine 5'-phosphate synthase.